A 359-amino-acid chain; its full sequence is 5-amino-6-(D-ribitylamino)uracil--L-tyrosine 4-hydroxyphenyl transferase 1 (359 aa).

Positions 45 to 282 constitute a Radical SAM core domain; sequence VTYVVNANIN…VYAISRIFFK (238 aa). The [4Fe-4S] cluster site is built by Cys-59, Cys-63, and Cys-66.

It belongs to the radical SAM superfamily. CofH family. As to quaternary structure, consists of two subunits, CofG and CofH. [4Fe-4S] cluster is required as a cofactor.

The catalysed reaction is 5-amino-6-(D-ribitylamino)uracil + L-tyrosine + S-adenosyl-L-methionine = 5-amino-5-(4-hydroxybenzyl)-6-(D-ribitylimino)-5,6-dihydrouracil + 2-iminoacetate + 5'-deoxyadenosine + L-methionine + H(+). Its pathway is cofactor biosynthesis; coenzyme F0 biosynthesis. Functionally, catalyzes the radical-mediated synthesis of 5-amino-5-(4-hydroxybenzyl)-6-(D-ribitylimino)-5,6-dihydrouracil from 5-amino-6-(D-ribitylamino)uracil and L-tyrosine. This chain is 5-amino-6-(D-ribitylamino)uracil--L-tyrosine 4-hydroxyphenyl transferase 1, found in Methanococcus maripaludis (strain DSM 14266 / JCM 13030 / NBRC 101832 / S2 / LL).